A 98-amino-acid chain; its full sequence is NADH-ubiquinone oxidoreductase chain 4L (98 aa).

3 consecutive transmembrane segments (helical) span residues Met1–Ile21, Ser29–Leu49, and Ile61–Val81.

This sequence belongs to the complex I subunit 4L family. As to quaternary structure, core subunit of respiratory chain NADH dehydrogenase (Complex I) which is composed of 45 different subunits.

Its subcellular location is the mitochondrion inner membrane. It catalyses the reaction a ubiquinone + NADH + 5 H(+)(in) = a ubiquinol + NAD(+) + 4 H(+)(out). In terms of biological role, core subunit of the mitochondrial membrane respiratory chain NADH dehydrogenase (Complex I) which catalyzes electron transfer from NADH through the respiratory chain, using ubiquinone as an electron acceptor. Part of the enzyme membrane arm which is embedded in the lipid bilayer and involved in proton translocation. This chain is NADH-ubiquinone oxidoreductase chain 4L (MT-ND4L), found in Echinops telfairi (Lesser hedgehog tenrec).